The following is a 530-amino-acid chain: MARLCTHTESGHYLMALDAGTGSVRAVIFDLQGKQIAVGQAEWQHLAVPDVPGSMEFDLAKNWQLACQCIRQALQKAAIPATAIAAVSACSMRESIVIYDSNGEPIWACANVDARAAHEVSELKELHDNTFEEEVYRCSGQTLALSAIPRLLWLAHHRPDIYHRASTVTMISDWMAFMLSGELAVDPSNAGTTGLLDLVTRNWKRSLLQMAGLRSDILSPVKETGTLLGHISQKAAEQCDLQAGTPVIVGGGDVQLGCLGLGVVRPAQTAVLGGTFWQQVVNLPAPVTDPNMNVRINPHVIPGMVQTESISFFTGLTMRWFRDAFCAEEKLIAERLGIDAYSLLEDMASRVPPGAYGVMPIFSDVMRFKRWYHAAPSFINLSIDPEKCNKATLFRALEENAAIVSACNLQQIAAFSGVQADSLVFAGGGSKGKLWSQILADVTGLTVHVPVVKEATALGCAIAAGVGVGIWPSLAETGEKLVRWDREHKPNPENFAVYQQAREKWQAVYQDQRALVDGGLTTSLWKAPGL.

This sequence belongs to the FGGY kinase family.

It localises to the cytoplasm. The catalysed reaction is (S)-4,5-dihydroxypentane-2,3-dione + ATP = (2S)-2-hydroxy-3,4-dioxopentyl phosphate + ADP + H(+). Functionally, catalyzes the phosphorylation of autoinducer-2 (AI-2) to phospho-AI-2, which subsequently inactivates the transcriptional regulator LsrR and leads to the transcription of the lsr operon. Phosphorylates the ring-open form of (S)-4,5-dihydroxypentane-2,3-dione (DPD), which is the precursor to all AI-2 signaling molecules, at the C5 position. This chain is Autoinducer-2 kinase, found in Salmonella choleraesuis (strain SC-B67).